A 185-amino-acid polypeptide reads, in one-letter code: TATA-box-binding protein 3 (185 aa).

Tandem repeats lie at residues I7–L84 and V100–F178.

The protein belongs to the TBP family.

Its function is as follows. General factor that plays a role in the activation of archaeal genes transcribed by RNA polymerase. Binds specifically to the TATA box promoter element which lies close to the position of transcription initiation. This Methanosarcina acetivorans (strain ATCC 35395 / DSM 2834 / JCM 12185 / C2A) protein is TATA-box-binding protein 3.